The primary structure comprises 302 residues: MELRHLQYFIAVAEELHFGKAARRLNMTQPPLSQQIKQLEEEVGVTLLKRTKRFVELTAAGEIFLNHCRMALMQIGQGIELAQRTARGEQGLLVIGFVGSATYEFLPPIVREYRKKFPSVKIELREISSSRQQEELLKGNIDIGILHPPLQHTALHIETAQSSPCVLALPKQHPLTSKESITIEDLRDEPIITVAKEAWPTLYMDFIQFCEQAGFRPNIVQEATEYQMVIGLVSAGIGMTFVPSSAKKLFNLDVTYRKMDQIQLNAEWVIAYRKDNHNPLIKHFIHISNCQQTRTKESDAGT.

The 58-residue stretch at 1–58 (MELRHLQYFIAVAEELHFGKAARRLNMTQPPLSQQIKQLEEEVGVTLLKRTKRFVELT) folds into the HTH lysR-type domain. The segment at residues 18 to 37 (FGKAARRLNMTQPPLSQQIK) is a DNA-binding region (H-T-H motif).

It belongs to the LysR transcriptional regulatory family.

Functionally, regulates the expression of the alsSD operon for acetoin biosynthesis. In Bacillus subtilis (strain 168), this protein is HTH-type transcriptional regulator AlsR (alsR).